A 525-amino-acid polypeptide reads, in one-letter code: D-aminopeptidase (525 aa).

The Nucleophile role is filled by S62. The active-site Proton donor/acceptor is K65. Residues 485–495 (PRALDHTAPGD) are important for specificity. D489 contributes to the substrate binding site.

This sequence belongs to the peptidase S12 family. Homodimer.

It catalyses the reaction Release of an N-terminal D-amino acid from a peptide, Xaa-|-Yaa-, in which Xaa is preferably D-Ala, D-Ser or D-Thr. D-amino acid amides and methyl esters also are hydrolyzed, as is glycine amide.. Inhibited by beta-lactam compounds such as 6-aminopenicillic acid, 7-aminocephalosporanic acid, benzylpenicillin and ampicillin. Inhibited by p-chloromercuribenzoate. In terms of biological role, hydrolyzes N-terminal residues in D-amino acid-containing peptides. This is D-aminopeptidase from Gluconobacter oxydans (strain 621H) (Gluconobacter suboxydans).